Here is an 85-residue protein sequence, read N- to C-terminus: Large ribosomal subunit protein uL23 (85 aa).

This sequence belongs to the universal ribosomal protein uL23 family. As to quaternary structure, part of the 50S ribosomal subunit. Interacts with protein L29 and weakly with protein L39e.

In terms of biological role, binds to a specific region on the 23S rRNA. Located at the polypeptide exit tunnel on the outside of the subunit. The chain is Large ribosomal subunit protein uL23 from Haloarcula marismortui (strain ATCC 43049 / DSM 3752 / JCM 8966 / VKM B-1809) (Halobacterium marismortui).